A 601-amino-acid polypeptide reads, in one-letter code: Probable serine/threonine-protein kinase WNK3 (601 aa).

The 258-residue stretch at 34 to 291 (GRFNEILGKG…ARELLDDPFL (258 aa)) folds into the Protein kinase domain. Residues 114–117 (TELF) and K164 contribute to the ATP site. D181 serves as the catalytic Proton acceptor. 2 disordered regions span residues 470-498 (GWRP…PGGA) and 551-601 (ADDD…SEQP). Residues 477-493 (TDDDDDDDLVGGGDDPD) are compositionally biased toward acidic residues. The segment covering 560–571 (LQGSSSDTGGSN) has biased composition (polar residues). Positions 572–583 (HEQHAMGKDKEV) are enriched in basic and acidic residues.

This sequence belongs to the protein kinase superfamily. Ser/Thr protein kinase family. WNK subfamily.

It carries out the reaction L-seryl-[protein] + ATP = O-phospho-L-seryl-[protein] + ADP + H(+). It catalyses the reaction L-threonyl-[protein] + ATP = O-phospho-L-threonyl-[protein] + ADP + H(+). The polypeptide is Probable serine/threonine-protein kinase WNK3 (WNK3) (Oryza sativa subsp. japonica (Rice)).